Consider the following 832-residue polypeptide: Ventricular zone-expressed PH domain-containing protein homolog 1 (832 aa).

The tract at residues 201–319 (AELLALMSQL…RYLVSQLANM (119 aa)) is interaction with TGFBR1. Residues 497 to 519 (DTHGSQLRNSSASHPSIIHSEPE) form a disordered region. Residues 499–510 (HGSQLRNSSASH) are compositionally biased toward polar residues. The segment at 663 to 832 (ESTFPQQKDL…RESREVTTYL (170 aa)) is interaction with TGFBR1. The PH domain maps to 716-818 (QPLIEGKLKE…WLQCINVALA (103 aa)).

Belongs to the MELT/VEPH family. Interacts with TGFBR1.

It localises to the cell membrane. In terms of biological role, interacts with TGF-beta receptor type-1 (TGFBR1) and inhibits dissociation of activated SMAD2 from TGFBR1, impeding its nuclear accumulation and resulting in impaired TGF-beta signaling. May also affect FOXO, Hippo and Wnt signaling. The protein is Ventricular zone-expressed PH domain-containing protein homolog 1 (Veph1) of Rattus norvegicus (Rat).